Consider the following 310-residue polypeptide: Putative dihydroorotate dehydrogenase A (fumarate) (310 aa).

Residues K45, N69–L73, and N128 contribute to the substrate site. K45–T46 is an FMN binding site. N128 is an FMN binding site. Residue C131 is the Nucleophile of the active site. Residues K165 and V193 each coordinate FMN. N194–S195 is a binding site for substrate. FMN contacts are provided by residues G220, G248–G249, and G270–T271.

This sequence belongs to the dihydroorotate dehydrogenase family. Type 1 subfamily. In terms of assembly, homodimer. The cofactor is FMN.

It is found in the cytoplasm. The catalysed reaction is (S)-dihydroorotate + fumarate = orotate + succinate. It functions in the pathway pyrimidine metabolism; UMP biosynthesis via de novo pathway. Its function is as follows. Catalyzes the conversion of dihydroorotate to orotate with fumarate as the electron acceptor. The polypeptide is Putative dihydroorotate dehydrogenase A (fumarate) (pyrD) (Streptococcus agalactiae serotype Ia (strain ATCC 27591 / A909 / CDC SS700)).